Reading from the N-terminus, the 127-residue chain is Large ribosomal subunit protein bL21 (127 aa).

The protein belongs to the bacterial ribosomal protein bL21 family. Part of the 50S ribosomal subunit. Contacts protein L20.

Functionally, this protein binds to 23S rRNA in the presence of protein L20. The polypeptide is Large ribosomal subunit protein bL21 (Blochmanniella floridana).